A 425-amino-acid chain; its full sequence is UDP-sugar transporter protein SLC35A5 (425 aa).

Residues 1–7 (MESNCGH) are Cytoplasmic-facing. Residues 8-28 (PMLSVSSAMYTFLLGAIFITL) form a helical membrane-spanning segment. Topologically, residues 29 to 52 (SSSRILLVKYSANEENKYDYLPTT) are lumenal. A helical transmembrane segment spans residues 53 to 73 (VNVCSELVKLVFCALVSFWVL). Residues 74 to 92 (KKEDHQNRKLRCGSWKEFF) are Cytoplasmic-facing. A helical transmembrane segment spans residues 93 to 115 (NFMKWSIPAFLYFLDNLIVFYVL). The Lumenal segment spans residues 116-119 (SYLQ). A helical membrane pass occupies residues 120–142 (PAMAVIFSNFSIITTALLFRIVL). Topologically, residues 143 to 147 (KRHLN) are cytoplasmic. A helical membrane pass occupies residues 148–168 (GIQWASLLILFLSIVALTSGT). At 169–228 (ETSQHSLAGHGFHHDALFSPSNSCLLFRSECPRKDNCTAKEWTFSEAQWNTTARVFSHIR) the chain is on the lumenal side. N-linked (GlcNAc...) asparagine glycosylation is found at Asn204 and Asn218. A helical membrane pass occupies residues 229–249 (LGLGHVLIIVQCFISSMANIY). At 250-263 (NEKILKEGNQLTES) the chain is on the cytoplasmic side. A helical membrane pass occupies residues 264–284 (IFVQNSKLYFFGVLFNGLTLG). Topologically, residues 285–303 (LQSGNRDQIKNCGIFYGHN) are lumenal. Residues 304–324 (AFSVALIFVTAFQGLSVAFIL) traverse the membrane as a helical segment. Topologically, residues 325 to 330 (KFLDNM) are cytoplasmic. The helical transmembrane segment at 331–351 (FHVLMAQVTTVVITTVSVLVF) threads the bilayer. Residues 352–354 (DFR) lie on the Lumenal side of the membrane. A helical transmembrane segment spans residues 355–375 (PSLEFFLEAPSVLLSILIYNA). Residues 376-425 (SNPQGVENVPRKERIRDLSGTLWERSSGDGEELERLTKPKSDIESDEDTF) lie on the Cytoplasmic side of the membrane. Residues Ser394, Ser416, and Ser420 each carry the phosphoserine modification. A disordered region spans residues 398–425 (WERSSGDGEELERLTKPKSDIESDEDTF). A compositionally biased stretch (basic and acidic residues) spans 408 to 418 (LERLTKPKSDI).

It belongs to the nucleotide-sugar transporter family. SLC35A subfamily. As to quaternary structure, probably forms homooligomers and heterooligomers with SLC35A1, SLC35A2, SLC35A3 and SLC35A4.

Its subcellular location is the golgi apparatus membrane. It carries out the reaction UMP(out) + UDP-alpha-D-glucuronate(in) = UMP(in) + UDP-alpha-D-glucuronate(out). The catalysed reaction is UMP(out) + UDP-N-acetyl-alpha-D-glucosamine(in) = UMP(in) + UDP-N-acetyl-alpha-D-glucosamine(out). The enzyme catalyses UDP-N-acetyl-alpha-D-galactosamine(in) + UMP(out) = UDP-N-acetyl-alpha-D-galactosamine(out) + UMP(in). Functionally, probable UDP-sugar:UMP transmembrane antiporter involved in UDP-alpha-D-glucuronate/UDP-GlcA, UDP-GlcNAc/UDP-N-acetyl-alpha-D-glucosamine and UDP-N-acetyl-alpha-D-galactosamine/UDP-GalNAc transport from the cytosol to the lumen of the Golgi. This chain is UDP-sugar transporter protein SLC35A5, found in Bos taurus (Bovine).